We begin with the raw amino-acid sequence, 455 residues long: Major facilitator superfamily domain-containing protein 10 (455 aa).

A run of 11 helical transmembrane segments spans residues 27-47 (VVFL…PLLP), 86-106 (VLFG…CAPL), 113-135 (CLGR…AVWA), 148-168 (LIGG…ADLG), 176-196 (GMAV…MLGA), 202-222 (MAPW…FCFL), 275-295 (LGLV…TLSF), 310-327 (KMFF…GAYA), 336-356 (VAAV…IGWG), 359-379 (LPVL…VVPC), and 421-441 (LAGA…PFFL).

Belongs to the major facilitator superfamily. In terms of tissue distribution, expressed in luminal membrane of renal tubules (at protein level). Detected in all tissues tested with higher expression in heart, splee, kidney, leukocytes and prostate.

It is found in the nucleus inner membrane. It localises to the cell membrane. Its function is as follows. Probable organic anion transporter which may serve as a transporter for some non-steroidal anti-inflammatory drugs (NSAIDs) as well as other organic anions across the luminal membranes of renal proximal tubules at the final excretion step into the urine. The chain is Major facilitator superfamily domain-containing protein 10 (MFSD10) from Homo sapiens (Human).